A 344-amino-acid polypeptide reads, in one-letter code: uncharacterized protein (344 aa).

Residues 221–249 (IQAQSMDEQKQIQEIYQNVEKLKEDVTKN) are a coiled coil.

The protein belongs to the IIV-6 287R family.

This is an uncharacterized protein from Aedes vexans (Inland floodwater mosquito).